The chain runs to 198 residues: NAD(P)H dehydrogenase (quinone) (198 aa).

In terms of domain architecture, Flavodoxin-like spans Ile-4–Val-189. Residues Ser-10 to Ile-15 and Thr-78 to Phe-80 each bind FMN. Position 12 (Tyr-12) interacts with NAD(+). Trp-98 provides a ligand contact to substrate. Residues Ser-113–Gly-118 and His-133 contribute to the FMN site.

Belongs to the WrbA family. It depends on FMN as a cofactor.

The enzyme catalyses a quinone + NADH + H(+) = a quinol + NAD(+). It catalyses the reaction a quinone + NADPH + H(+) = a quinol + NADP(+). The polypeptide is NAD(P)H dehydrogenase (quinone) (Salmonella typhi).